Here is an 874-residue protein sequence, read N- to C-terminus: MEERSKLRYLSMLEVERDTISDVSEKRKFFVTFTYPYMNGRLHLGHLFSISKADFFSYYKELQGYNVLFPFSFHCTGMPISASAKKLAEELSGEKVDLSVKKIIEDLGFDDVKPFTDPVHWVRTFPGLCERSLKRFHGNIDWRRSFITTDINKYYDSFIKWQFNRLNELGHLSFGKRHSIFCPVDKQPCLDHDRRKGENVKPVGVVLCKLRFSEGILLARIKQGCVPSKAVVGSRCDFIGFEYCNEKYFAEKDVFENVDAQASGICVRESVKGDFFGGRRFSGFGKEVVCDAIEKDVPCVVKGTQDKKDPSLAEYIKNEIELISKVESTETQLAETKDLLKFYEPEEEVISRSGGKCIVALTDQWYINYCDPEWKKKVKRCIENLVCTDDTRAILEDGLEWIGKWGFSRSFGLGTRIPWDSEYLIDSLSDSTIYMAMYTFKHFLYRDLEGKDELFPSNRLSDDVWNYIFLNRSITEDLAPYEEILSNCRESFNYFYPIDLRVGGKDLLKNHLIFFLFNHVALFEEKHWPKRMFTNGHLMLNSEKMSKSSGNYMTVDESLDKFGVSSTRMCLAVCGDGNEDANFVESNANAFVLKLYSYVKMIEELCTGRSLNPCILDLMKGYGEMGFADRFLMQTISMNVAHATRAHEDMTYRDVVKYGFYEMVHAKEMYHILGGTNNEILFLLCKAMTQLLYPIIPSLARYLIETYFYSNFSLPVPFLSDTAEIDGVSYLKNTLKRLVAQKRRKKRCEVVEILVGVEYSEWKRKCMSIIDQIACECKVLNINVSEEMKTGESQFVPKIIDAVREVLKEFGIPEKKGILFSMDYLNHPENYSVKFNEYEVLKAHKYYIENNTGLEVIVCVSPRADPGTPLFEFK.

A 'HIGH' region motif is present at residues 36-46 (PYMNGRLHLGH). A 'KMSKS' region motif is present at residues 544–548 (KMSKS). Residue Lys547 coordinates ATP.

The protein belongs to the class-I aminoacyl-tRNA synthetase family.

It is found in the cytoplasm. The catalysed reaction is tRNA(Leu) + L-leucine + ATP = L-leucyl-tRNA(Leu) + AMP + diphosphate. The protein is Probable leucine--tRNA ligase, cytoplasmic of Encephalitozoon cuniculi (strain GB-M1) (Microsporidian parasite).